A 90-amino-acid polypeptide reads, in one-letter code: Gene 56 protein (90 aa).

A Glutaredoxin domain is found at 1 to 90 (MRTMFTPITI…DYYTASETGL (90 aa)). Residues Cys16 and Cys19 are joined by a disulfide bond.

The polypeptide is Gene 56 protein (56) (Mycobacterium phage D29 (Mycobacteriophage D29)).